The chain runs to 537 residues: Tyrosine-protein phosphatase CDC14 homolog (537 aa).

Residues Asp182–Glu345 form the Tyrosine-protein phosphatase domain. Cys286 serves as the catalytic Phosphocysteine intermediate. Positions Glu359 to Ser537 are disordered. A compositionally biased stretch (polar residues) spans Asn370 to Thr382. The segment covering Pro400–Ser411 has biased composition (low complexity). A compositionally biased stretch (polar residues) spans Ala421–Tyr437. Thr453 bears the Phosphothreonine mark. Ser468 and Ser470 each carry phosphoserine. Residues Arg490–Ser502 are compositionally biased toward low complexity. Ser513 carries the post-translational modification Phosphoserine. Residues Met514 to Gly523 show a composition bias toward polar residues. Residues Ala526–Ser537 are compositionally biased toward basic residues.

The protein belongs to the protein-tyrosine phosphatase family. Non-receptor class CDC14 subfamily. Interacts with ark1 at the kinetochores. Interacts with bir1, cdc25, mid1, nbl1, pic1, and rad24. Post-translationally, phosphorylated by cds1, chk1, pmk1, and cdc2 upon Hydroxylurea and H(2)O(2) stress treatment. Phosphorylation regulates the nucleolar-to-nucleoplasmic transition. Is able to autodephosphorylate.

The protein resides in the nucleus. It is found in the nucleolus. It localises to the cytoplasm. The protein localises to the cytoskeleton. Its subcellular location is the microtubule organizing center. The protein resides in the spindle pole body. The enzyme catalyses O-phospho-L-tyrosyl-[protein] + H2O = L-tyrosyl-[protein] + phosphate. Its function is as follows. Protein phosphatase which antagonizes mitotic cyclin-dependent kinase cdc2, the inactivation of which is essential for exit from mitosis. To access its substrates, is released from nucleolar sequestration during mitosis. Plays an essential in coordinating the nuclear division cycle with cytokinesis through the cytokinesis checkpoint. Involved in chromosome segregation, where it is required for meiosis I spindle dissambly as well as for establishing two consecutive chromosome segregation phases. Allows damaged actomyosin rings to be maintained to facilitate completion of cell division in response to minor perturbation of the cell division machinery. Dephosphorylates the mitotic inducer cdc25 for its rapid degradation. Down-regulation of cdc25 activity ensures a prompt inactivation of mitotic cdc2 complexes to trigger cell division. Also dephosphorylates cdc2-phosphorylated nsk1, allowing nsk1-binding to kinetochores and spindle. Dephosphorylates ase1, which is essential for spindle midzone assembly and for continuous extension of the anaphase spindle. Tethered to the contractile ring by mid1, where it dephosphorylates cdc15. This chain is Tyrosine-protein phosphatase CDC14 homolog (clp1), found in Schizosaccharomyces pombe (strain 972 / ATCC 24843) (Fission yeast).